We begin with the raw amino-acid sequence, 228 residues long: Extracellular protease inhibitor 10 (228 aa).

The signal sequence occupies residues 1 to 22; sequence MKSAFTLSLALVAVTATISAAA. Kazal-like domains are found at residues 23-72, 90-127, and 156-208; these read DDNC…ECAS, TSGT…AKCK, and GYQG…EGTL. N-linked (GlcNAc...) asparagine glycosylation is present at Asn-25. 3 disulfides stabilise this stretch: Cys-26/Cys-56, Cys-30/Cys-49, and Cys-38/Cys-70. The tract at residues 69–92 is disordered; that stretch reads ECASTPASSATPSPVTSSTGSTSG. The span at 71–92 shows a compositional bias: low complexity; that stretch reads ASTPASSATPSPVTSSTGSTSG. 4 disulfides stabilise this stretch: Cys-96/Cys-126, Cys-100/Cys-119, Cys-162/Cys-193, and Cys-167/Cys-186. N-linked (GlcNAc...) asparagine glycosylation occurs at Asn-199.

As to quaternary structure, interacts with host subtilisin-like protease P69B.

Its subcellular location is the secreted. Functionally, secreted effector that interacts with and inhibits the pathogenesis-related P69B subtilisin-like serine protease of host tomato. Inhibition of host proteases by a pathogen extracellular protease inhibitor forms a specific type of defense-counterdefense mechanism between plants and microbial pathogens. This chain is Extracellular protease inhibitor 10, found in Phytophthora infestans (strain T30-4) (Potato late blight agent).